The following is a 227-amino-acid chain: Cytochrome c oxidase subunit 2 (227 aa).

Topologically, residues 1-14 (MAHAAQMGLQDATS) are mitochondrial intermembrane. Residues 15–45 (PIMEELISFHDHALMIIFLISFLVLYALFLT) traverse the membrane as a helical segment. Topologically, residues 46–59 (LTTKLTNTNITDAQ) are mitochondrial matrix. The chain crosses the membrane as a helical span at residues 60 to 87 (EMETVWTILPAIILVLIALPSLRILYLT). Topologically, residues 88 to 227 (DEINDPSFTI…IFEMGPVFTL (140 aa)) are mitochondrial intermembrane. Cu cation is bound by residues H161, C196, E198, C200, H204, and M207. E198 is a Mg(2+) binding site.

It belongs to the cytochrome c oxidase subunit 2 family. As to quaternary structure, component of the cytochrome c oxidase (complex IV, CIV), a multisubunit enzyme composed of 14 subunits. The complex is composed of a catalytic core of 3 subunits MT-CO1, MT-CO2 and MT-CO3, encoded in the mitochondrial DNA, and 11 supernumerary subunits COX4I, COX5A, COX5B, COX6A, COX6B, COX6C, COX7A, COX7B, COX7C, COX8 and NDUFA4, which are encoded in the nuclear genome. The complex exists as a monomer or a dimer and forms supercomplexes (SCs) in the inner mitochondrial membrane with NADH-ubiquinone oxidoreductase (complex I, CI) and ubiquinol-cytochrome c oxidoreductase (cytochrome b-c1 complex, complex III, CIII), resulting in different assemblies (supercomplex SCI(1)III(2)IV(1) and megacomplex MCI(2)III(2)IV(2)). Found in a complex with TMEM177, COA6, COX18, COX20, SCO1 and SCO2. Interacts with TMEM177 in a COX20-dependent manner. Interacts with COX20. Interacts with COX16. It depends on Cu cation as a cofactor.

It is found in the mitochondrion inner membrane. It catalyses the reaction 4 Fe(II)-[cytochrome c] + O2 + 8 H(+)(in) = 4 Fe(III)-[cytochrome c] + 2 H2O + 4 H(+)(out). Component of the cytochrome c oxidase, the last enzyme in the mitochondrial electron transport chain which drives oxidative phosphorylation. The respiratory chain contains 3 multisubunit complexes succinate dehydrogenase (complex II, CII), ubiquinol-cytochrome c oxidoreductase (cytochrome b-c1 complex, complex III, CIII) and cytochrome c oxidase (complex IV, CIV), that cooperate to transfer electrons derived from NADH and succinate to molecular oxygen, creating an electrochemical gradient over the inner membrane that drives transmembrane transport and the ATP synthase. Cytochrome c oxidase is the component of the respiratory chain that catalyzes the reduction of oxygen to water. Electrons originating from reduced cytochrome c in the intermembrane space (IMS) are transferred via the dinuclear copper A center (CU(A)) of subunit 2 and heme A of subunit 1 to the active site in subunit 1, a binuclear center (BNC) formed by heme A3 and copper B (CU(B)). The BNC reduces molecular oxygen to 2 water molecules using 4 electrons from cytochrome c in the IMS and 4 protons from the mitochondrial matrix. In Symphalangus syndactylus (Siamang), this protein is Cytochrome c oxidase subunit 2 (MT-CO2).